We begin with the raw amino-acid sequence, 293 residues long: Glycine--tRNA ligase alpha subunit (293 aa).

Belongs to the class-II aminoacyl-tRNA synthetase family. As to quaternary structure, tetramer of two alpha and two beta subunits.

The protein resides in the cytoplasm. It catalyses the reaction tRNA(Gly) + glycine + ATP = glycyl-tRNA(Gly) + AMP + diphosphate. In Acaryochloris marina (strain MBIC 11017), this protein is Glycine--tRNA ligase alpha subunit.